The sequence spans 389 residues: S-adenosylmethionine synthase (389 aa).

His-15 provides a ligand contact to ATP. Asp-17 lines the Mg(2+) pocket. Residue Glu-43 participates in K(+) binding. Residues Glu-56 and Gln-99 each coordinate L-methionine. Positions 99 to 109 (QSPDIAQGVNE) are flexible loop. Residues 166 to 168 (DAK), 234 to 235 (RF), Asp-243, 249 to 250 (RK), Ala-266, and Lys-270 each bind ATP. L-methionine is bound at residue Asp-243. Lys-274 contributes to the L-methionine binding site.

It belongs to the AdoMet synthase family. Homotetramer; dimer of dimers. Mg(2+) serves as cofactor. It depends on K(+) as a cofactor.

It localises to the cytoplasm. It carries out the reaction L-methionine + ATP + H2O = S-adenosyl-L-methionine + phosphate + diphosphate. It participates in amino-acid biosynthesis; S-adenosyl-L-methionine biosynthesis; S-adenosyl-L-methionine from L-methionine: step 1/1. Its function is as follows. Catalyzes the formation of S-adenosylmethionine (AdoMet) from methionine and ATP. The overall synthetic reaction is composed of two sequential steps, AdoMet formation and the subsequent tripolyphosphate hydrolysis which occurs prior to release of AdoMet from the enzyme. The protein is S-adenosylmethionine synthase of Neisseria meningitidis serogroup B (strain ATCC BAA-335 / MC58).